The sequence spans 275 residues: Adenylate kinase (275 aa).

Residue 54-59 (GAGKGT) coordinates ATP. Positions 74-103 (ATGDMLRSQVAKKTPLGREAKKIMDQGGLV) are NMP. AMP-binding positions include threonine 75, arginine 80, 101–103 (GLV), 130–133 (GFPR), and glutamine 137. Residues 171 to 208 (GRLVHPASGRSYHRVFNPPKADMKDDITGEPLVSRSDD) are LID. ATP is bound by residues arginine 172 and 181 to 182 (SY). AMP contacts are provided by arginine 205 and arginine 216. Glutamine 244 is a binding site for ATP.

It belongs to the adenylate kinase family. AK2 subfamily. Monomer.

The protein localises to the cytoplasm. It is found in the cytosol. It localises to the mitochondrion intermembrane space. It catalyses the reaction AMP + ATP = 2 ADP. In terms of biological role, catalyzes the reversible transfer of the terminal phosphate group between ATP and AMP. Plays an important role in cellular energy homeostasis and in adenine nucleotide metabolism. Adenylate kinase activity is critical for regulation of the phosphate utilization and the AMP de novo biosynthesis pathways. This chain is Adenylate kinase (adk1), found in Botryotinia fuckeliana (strain B05.10) (Noble rot fungus).